Here is a 483-residue protein sequence, read N- to C-terminus: Regulatory protein ViaA (483 aa).

The protein belongs to the ViaA family. As to quaternary structure, homodimer. Interacts with RavA.

The protein localises to the cytoplasm. Functionally, component of the RavA-ViaA chaperone complex, which may act on the membrane to optimize the function of some of the respiratory chains. ViaA stimulates the ATPase activity of RavA. The protein is Regulatory protein ViaA of Escherichia coli O1:K1 / APEC.